The primary structure comprises 697 residues: SPX domain-containing membrane protein At1g63010 (697 aa).

Residues 2–145 (VAFGKYLQRK…GYRFADYYVK (144 aa)) form the SPX domain. 6 consecutive transmembrane segments (helical) span residues 247–267 (FNSL…TYII), 278–298 (LGAA…AQVF), 315–335 (LVFS…AYDA), 337–356 (SIAL…ARAV), 375–395 (AGFV…AGLL), and 411–431 (LPGW…CISF). The tract at residues 439 to 459 (EDGEKNNRNETTSDRVESSRV) is disordered. Transmembrane regions (helical) follow at residues 513 to 533 (LLIY…SSVI), 544 to 564 (SVAI…ILVG), 576 to 596 (ILLT…NLFV), 604 to 624 (VISG…NLSL), and 670 to 690 (LLNA…VATC).

It belongs to the major facilitator superfamily.

The protein localises to the membrane. This Arabidopsis thaliana (Mouse-ear cress) protein is SPX domain-containing membrane protein At1g63010.